The following is a 1963-amino-acid chain: Myosin-4 (1963 aa).

Positions 28–77 constitute a Myosin N-terminal SH3-like domain; that stretch reads DSKKNVWIPDPEEGYLAGEITATKGDQVTIVTARGNEVTLKKELVQEMNP. Positions 81–787 constitute a Myosin motor domain; it reads EKTEDMSNLS…VLAHLEDIRD (707 aa). K125 is subject to N6,N6,N6-trimethyllysine. Residue 174–181 participates in ATP binding; the sequence is GESGAGKT. Actin-binding stretches follow at residues 662–684 and 766–780; these read LNNLMTMLNKTHPHFIRCIIPNE and RIGLTKVFFKAGVLA. The alpha-helical tailpiece (S2) stretch occupies residues 848 to 1161; sequence MLKAGKEAEE…LEELGEKLDE (314 aa). Positions 848 to 1963 form a coiled coil; that stretch reads MLKAGKEAEE…SPSRARASDF (1116 aa). Basic and acidic residues-rich tracts occupy residues 970–988 and 1133–1146; these read LRKAESEKQSKDHQIRSLQ and NERQSRSKADRAKS. 2 disordered regions span residues 970–990 and 1125–1146; these read LRKAESEKQSKDHQIRSLQDE and SELEEELENERQSRSKADRAKS. A hinge region spans residues 1162–1173; the sequence is QGGATAAQVEVN. Positions 1162–1963 are light meromyosin (LMM); that stretch reads QGGATAAQVE…SPSRARASDF (802 aa). 2 disordered regions span residues 1317–1336 and 1912–1963; these read LTSQLEEARRTADEEARERQ and LEDA…ASDF. A compositionally biased stretch (basic and acidic residues) spans 1322–1336; the sequence is EEARRTADEEARERQ.

Belongs to the TRAFAC class myosin-kinesin ATPase superfamily. Myosin family. As to quaternary structure, muscle myosin is a hexameric protein that consists of 2 heavy chain subunits (MHC), 2 alkali light chain subunits (MLC) and 2 regulatory light chain subunits (MLC-2). Forms a complex composed of chaperone unc-45, unc-54 and ubiquitin-protein ligase ufd-2; promotes poly-ubiquitination of unfolded unc-54. Within the complex interacts with unc-45 (via UCS domain) and ufd-2. Interacts with itr-1 (via c-terminal coiled coil domain). Post-translationally, unfolded unc-54 is poly-ubiquitinated by ufd-2.

The protein localises to the cytoplasm. The protein resides in the myofibril. Required for muscle contraction. This is Myosin-4 (unc-54) from Caenorhabditis elegans.